A 393-amino-acid polypeptide reads, in one-letter code: tRNA(Met) cytidine acetate ligase (393 aa).

ATP-binding residues include Gly-81, Asn-142, and Arg-167.

Belongs to the TmcAL family.

The protein localises to the cytoplasm. It catalyses the reaction cytidine(34) in elongator tRNA(Met) + acetate + ATP = N(4)-acetylcytidine(34) in elongator tRNA(Met) + AMP + diphosphate. Functionally, catalyzes the formation of N(4)-acetylcytidine (ac(4)C) at the wobble position of elongator tRNA(Met), using acetate and ATP as substrates. First activates an acetate ion to form acetyladenylate (Ac-AMP) and then transfers the acetyl group to tRNA to form ac(4)C34. In Bacillus cereus (strain AH187), this protein is tRNA(Met) cytidine acetate ligase.